The following is a 240-amino-acid chain: Large ribosomal subunit protein uL2 (240 aa).

A compositionally biased stretch (polar residues) spans methionine 1–glycine 11. 2 disordered regions span residues methionine 1–arginine 31 and glycine 206–lysine 240. Basic residues-rich tracts occupy residues glycine 13–valine 28 and serine 224–lysine 240.

The protein belongs to the universal ribosomal protein uL2 family. Part of the 50S ribosomal subunit. Forms a bridge to the 30S subunit in the 70S ribosome.

In terms of biological role, one of the primary rRNA binding proteins. Required for association of the 30S and 50S subunits to form the 70S ribosome, for tRNA binding and peptide bond formation. It has been suggested to have peptidyltransferase activity; this is somewhat controversial. Makes several contacts with the 16S rRNA in the 70S ribosome. The sequence is that of Large ribosomal subunit protein uL2 from Methanococcus maripaludis (strain C6 / ATCC BAA-1332).